The primary structure comprises 280 residues: UDP-3-O-acyl-N-acetylglucosamine deacetylase (280 aa).

Residues histidine 79, histidine 237, and aspartate 241 each coordinate Zn(2+). Histidine 264 functions as the Proton donor in the catalytic mechanism.

It belongs to the LpxC family. Zn(2+) serves as cofactor.

It carries out the reaction a UDP-3-O-[(3R)-3-hydroxyacyl]-N-acetyl-alpha-D-glucosamine + H2O = a UDP-3-O-[(3R)-3-hydroxyacyl]-alpha-D-glucosamine + acetate. It participates in glycolipid biosynthesis; lipid IV(A) biosynthesis; lipid IV(A) from (3R)-3-hydroxytetradecanoyl-[acyl-carrier-protein] and UDP-N-acetyl-alpha-D-glucosamine: step 2/6. Functionally, catalyzes the hydrolysis of UDP-3-O-myristoyl-N-acetylglucosamine to form UDP-3-O-myristoylglucosamine and acetate, the committed step in lipid A biosynthesis. The chain is UDP-3-O-acyl-N-acetylglucosamine deacetylase from Chlamydia felis (strain Fe/C-56) (Chlamydophila felis).